We begin with the raw amino-acid sequence, 425 residues long: Enolase (425 aa).

Position 163 (Q163) interacts with (2R)-2-phosphoglycerate. E205 serves as the catalytic Proton donor. Mg(2+)-binding residues include D242, E286, and D313. Residues K338, R367, S368, and K389 each coordinate (2R)-2-phosphoglycerate. The Proton acceptor role is filled by K338.

This sequence belongs to the enolase family. Mg(2+) is required as a cofactor.

It localises to the cytoplasm. The protein resides in the secreted. The protein localises to the cell surface. The catalysed reaction is (2R)-2-phosphoglycerate = phosphoenolpyruvate + H2O. Its pathway is carbohydrate degradation; glycolysis; pyruvate from D-glyceraldehyde 3-phosphate: step 4/5. Functionally, catalyzes the reversible conversion of 2-phosphoglycerate (2-PG) into phosphoenolpyruvate (PEP). It is essential for the degradation of carbohydrates via glycolysis. The sequence is that of Enolase from Lactobacillus delbrueckii subsp. bulgaricus (strain ATCC 11842 / DSM 20081 / BCRC 10696 / JCM 1002 / NBRC 13953 / NCIMB 11778 / NCTC 12712 / WDCM 00102 / Lb 14).